A 710-amino-acid chain; its full sequence is Interleukin-1 receptor-associated kinase 1 (710 aa).

A Death domain is found at 27-106 (MCRFYKVMDA…DIITAWHPPA (80 aa)). Thr66 carries the post-translational modification Phosphothreonine; by PKC/PRKCI. Positions 107-133 (PVVPPSTAAPRPSSISAGSEAGDWSPR) are disordered. The tract at residues 110-211 (PPSTAAPRPS…FCEISQGTCN (102 aa)) is proST region. Positions 111–123 (PSTAAPRPSSISA) are enriched in low complexity. The residue at position 131 (Ser131) is a Phosphoserine. Glycyl lysine isopeptide (Lys-Gly) (interchain with G-Cter in ubiquitin) cross-links involve residues Lys134 and Lys180. Residues 169 to 190 (PPLPSSAPSSTKSSPESPVSGL) are disordered. Residues 174-188 (SAPSSTKSSPESPVS) show a composition bias toward low complexity. Phosphothreonine; by IRAK4 is present on Thr209. The Protein kinase domain maps to 212 to 521 (FSEELRIGEG…TQVYKRLEGL (310 aa)). Residues 218–226 (IGEGGFGCV) and Lys239 contribute to the ATP site. Asp340 acts as the Proton acceptor in catalysis. Residues 342-345 (KSSN) and Asp358 each bind ATP. Position 375 is a phosphoserine (Ser375). At Thr387 the chain carries Phosphothreonine. Disordered stretches follow at residues 527-655 (WELE…SEPP) and 689-710 (FPGL…EFQS). The span at 537 to 553 (PSPQENSYMSTTGSAQS) shows a compositional bias: polar residues. Residue Ser553 is modified to Phosphoserine. The span at 567–576 (APAQAAQQLQ) shows a compositional bias: low complexity. The span at 616 to 639 (SCTQGGTTRESSVRSSPGFQPTTM) shows a compositional bias: polar residues. The span at 640 to 654 (EGSPTGSSSLLSSEP) shows a compositional bias: low complexity.

The protein belongs to the protein kinase superfamily. TKL Ser/Thr protein kinase family. Pelle subfamily. In terms of assembly, homodimer. Forms a complex with TRAF6, PELI1, IRAK4 and MYD88. Direct binding of SMAD6 to PELI1 prevents complex formation and hence negatively regulates IL1R-TLR signaling and eventually NF-kappa-B-mediated gene expression. The TRAF6-PELI1-IRAK4-MYD88 complex recruits MAP3K7/TAK1, TAB1 and TAB2 to mediate NF-kappa-B activation. Interaction with MYD88 recruits IRAK1 to the stimulated receptor complex. Interacts with TOLLIP; this interaction occurs in the cytosol prior to receptor activation. Interacts with IL1RL1. Interacts (when polyubiquitinated) with IKBKG/NEMO. Interacts with RSAD2/viperin. Interacts with IRAK1BP1. Interacts with PELI2. Interacts with ZC3H12A; this interaction increases the interaction between ZC3H12A and IKBKB/IKKB. Interacts with IRAK4. Interacts with PELI3. Interacts with PELI1 and TRAF6. Interacts with INAVA; the interaction takes place upon PRR stimulation. Interacts (via C-terminus) with NFATC4 (via N-terminus). Mg(2+) serves as cofactor. In terms of processing, following recruitment on the activated receptor complex, phosphorylated on Thr-209, probably by IRAK4, resulting in a conformational change of the kinase domain, allowing further phosphorylations to take place. Thr-387 phosphorylation in the activation loop is required to achieve full enzymatic activity. Polyubiquitinated by TRAF6 after cell stimulation with IL-1-beta by PELI1, PELI2 and PELI3. Polyubiquitination occurs with polyubiquitin chains linked through 'Lys-63'. Ubiquitination promotes interaction with NEMO/IKBKG. Also sumoylated; leading to nuclear translocation. Highly expressed in liver, followed by kidney and skeletal muscle.

Its subcellular location is the cytoplasm. The protein localises to the nucleus. It is found in the lipid droplet. The enzyme catalyses L-seryl-[protein] + ATP = O-phospho-L-seryl-[protein] + ADP + H(+). It catalyses the reaction L-threonyl-[protein] + ATP = O-phospho-L-threonyl-[protein] + ADP + H(+). Serine/threonine-protein kinase that plays a critical role in initiating innate immune response against foreign pathogens. Involved in Toll-like receptor (TLR) and IL-1R signaling pathways. Is rapidly recruited by MYD88 to the receptor-signaling complex upon TLR activation. Association with MYD88 leads to IRAK1 phosphorylation by IRAK4 and subsequent autophosphorylation and kinase activation. Phosphorylates E3 ubiquitin ligases Pellino proteins (PELI1, PELI2 and PELI3) to promote pellino-mediated polyubiquitination of IRAK1. Then, the ubiquitin-binding domain of IKBKG/NEMO binds to polyubiquitinated IRAK1 bringing together the IRAK1-MAP3K7/TAK1-TRAF6 complex and the NEMO-IKKA-IKKB complex. In turn, MAP3K7/TAK1 activates IKKs (CHUK/IKKA and IKBKB/IKKB) leading to NF-kappa-B nuclear translocation and activation. Alternatively, phosphorylates TIRAP to promote its ubiquitination and subsequent degradation. Phosphorylates the interferon regulatory factor 7 (IRF7) to induce its activation and translocation to the nucleus, resulting in transcriptional activation of type I IFN genes, which drive the cell in an antiviral state. When sumoylated, translocates to the nucleus and phosphorylates STAT3. In Mus musculus (Mouse), this protein is Interleukin-1 receptor-associated kinase 1 (Irak1).